Consider the following 439-residue polypeptide: Chromosomal replication initiator protein DnaA (439 aa).

Residues 1-75 (MESWSRCLER…GIREVVLAIG (75 aa)) are domain I, interacts with DnaA modulators. The segment at 75–101 (GSRPKTTELPVPVDTTGRLSSTVPFNG) is domain II. The tract at residues 102–319 (NLDTHYNFDN…GALNTLVARA (218 aa)) is domain III, AAA+ region. ATP-binding residues include Gly147, Gly149, Lys150, and Thr151. The domain IV, binds dsDNA stretch occupies residues 320 to 439 (NFTGRAVTIE…WDKLMRKFSE (120 aa)).

This sequence belongs to the DnaA family. As to quaternary structure, oligomerizes as a right-handed, spiral filament on DNA at oriC.

It is found in the cytoplasm. Plays an essential role in the initiation and regulation of chromosomal replication. ATP-DnaA binds to the origin of replication (oriC) to initiate formation of the DNA replication initiation complex once per cell cycle. Binds the DnaA box (a 9 base pair repeat at the origin) and separates the double-stranded (ds)DNA. Forms a right-handed helical filament on oriC DNA; dsDNA binds to the exterior of the filament while single-stranded (ss)DNA is stabiized in the filament's interior. The ATP-DnaA-oriC complex binds and stabilizes one strand of the AT-rich DNA unwinding element (DUE), permitting loading of DNA polymerase. After initiation quickly degrades to an ADP-DnaA complex that is not apt for DNA replication. Binds acidic phospholipids. This is Chromosomal replication initiator protein DnaA from Xylella fastidiosa (strain 9a5c).